The chain runs to 335 residues: Holliday junction branch migration complex subunit RuvB (335 aa).

Residues 1–181 (MSERVISPEP…FGLLIRLNLY (181 aa)) form a large ATPase domain (RuvB-L) region. Residues Leu-20, Arg-21, Gly-62, Lys-65, Thr-66, Thr-67, 128–130 (EDF), Arg-171, Tyr-181, and Arg-218 contribute to the ATP site. Position 66 (Thr-66) interacts with Mg(2+). The tract at residues 182 to 252 (SPEDLEKIVT…IAGAGLALLQ (71 aa)) is small ATPAse domain (RuvB-S). The head domain (RuvB-H) stretch occupies residues 255-335 (ELGLDDIDRR…KLNHSQKTLF (81 aa)). The DNA site is built by Arg-310 and Arg-315.

It belongs to the RuvB family. Homohexamer. Forms an RuvA(8)-RuvB(12)-Holliday junction (HJ) complex. HJ DNA is sandwiched between 2 RuvA tetramers; dsDNA enters through RuvA and exits via RuvB. An RuvB hexamer assembles on each DNA strand where it exits the tetramer. Each RuvB hexamer is contacted by two RuvA subunits (via domain III) on 2 adjacent RuvB subunits; this complex drives branch migration. In the full resolvosome a probable DNA-RuvA(4)-RuvB(12)-RuvC(2) complex forms which resolves the HJ.

The protein resides in the cytoplasm. It catalyses the reaction ATP + H2O = ADP + phosphate + H(+). In terms of biological role, the RuvA-RuvB-RuvC complex processes Holliday junction (HJ) DNA during genetic recombination and DNA repair, while the RuvA-RuvB complex plays an important role in the rescue of blocked DNA replication forks via replication fork reversal (RFR). RuvA specifically binds to HJ cruciform DNA, conferring on it an open structure. The RuvB hexamer acts as an ATP-dependent pump, pulling dsDNA into and through the RuvAB complex. RuvB forms 2 homohexamers on either side of HJ DNA bound by 1 or 2 RuvA tetramers; 4 subunits per hexamer contact DNA at a time. Coordinated motions by a converter formed by DNA-disengaged RuvB subunits stimulates ATP hydrolysis and nucleotide exchange. Immobilization of the converter enables RuvB to convert the ATP-contained energy into a lever motion, pulling 2 nucleotides of DNA out of the RuvA tetramer per ATP hydrolyzed, thus driving DNA branch migration. The RuvB motors rotate together with the DNA substrate, which together with the progressing nucleotide cycle form the mechanistic basis for DNA recombination by continuous HJ branch migration. Branch migration allows RuvC to scan DNA until it finds its consensus sequence, where it cleaves and resolves cruciform DNA. The polypeptide is Holliday junction branch migration complex subunit RuvB (Methanoregula boonei (strain DSM 21154 / JCM 14090 / 6A8)).